A 359-amino-acid chain; its full sequence is 3-dehydroquinate synthase (359 aa).

Residues 72-77 (DGEHYK), 106-110 (GVIGD), 130-131 (TT), Lys143, and Lys152 each bind NAD(+). Zn(2+) is bound by residues Glu185, His248, and His265.

The protein belongs to the sugar phosphate cyclases superfamily. Dehydroquinate synthase family. It depends on Co(2+) as a cofactor. The cofactor is Zn(2+). NAD(+) serves as cofactor.

Its subcellular location is the cytoplasm. The enzyme catalyses 7-phospho-2-dehydro-3-deoxy-D-arabino-heptonate = 3-dehydroquinate + phosphate. Its pathway is metabolic intermediate biosynthesis; chorismate biosynthesis; chorismate from D-erythrose 4-phosphate and phosphoenolpyruvate: step 2/7. Catalyzes the conversion of 3-deoxy-D-arabino-heptulosonate 7-phosphate (DAHP) to dehydroquinate (DHQ). The chain is 3-dehydroquinate synthase from Thermodesulfovibrio yellowstonii (strain ATCC 51303 / DSM 11347 / YP87).